A 98-amino-acid chain; its full sequence is NADH-ubiquinone oxidoreductase chain 4L (98 aa).

3 helical membrane passes run Met1 to Met21, Ser29 to Leu49, and Ile61 to Val81.

Belongs to the complex I subunit 4L family. As to quaternary structure, core subunit of respiratory chain NADH dehydrogenase (Complex I) which is composed of 45 different subunits.

It is found in the mitochondrion inner membrane. The enzyme catalyses a ubiquinone + NADH + 5 H(+)(in) = a ubiquinol + NAD(+) + 4 H(+)(out). In terms of biological role, core subunit of the mitochondrial membrane respiratory chain NADH dehydrogenase (Complex I) which catalyzes electron transfer from NADH through the respiratory chain, using ubiquinone as an electron acceptor. Part of the enzyme membrane arm which is embedded in the lipid bilayer and involved in proton translocation. This is NADH-ubiquinone oxidoreductase chain 4L (MT-ND4L) from Ectophylla alba (White bat).